Here is a 475-residue protein sequence, read N- to C-terminus: ATP synthase subunit beta (475 aa).

Gly-152–Thr-159 is a binding site for ATP.

Belongs to the ATPase alpha/beta chains family. As to quaternary structure, F-type ATPases have 2 components, CF(1) - the catalytic core - and CF(0) - the membrane proton channel. CF(1) has five subunits: alpha(3), beta(3), gamma(1), delta(1), epsilon(1). CF(0) has three main subunits: a(1), b(2) and c(9-12). The alpha and beta chains form an alternating ring which encloses part of the gamma chain. CF(1) is attached to CF(0) by a central stalk formed by the gamma and epsilon chains, while a peripheral stalk is formed by the delta and b chains.

The protein localises to the cell membrane. The catalysed reaction is ATP + H2O + 4 H(+)(in) = ADP + phosphate + 5 H(+)(out). In terms of biological role, produces ATP from ADP in the presence of a proton gradient across the membrane. The catalytic sites are hosted primarily by the beta subunits. The polypeptide is ATP synthase subunit beta (Wolbachia pipientis wMel).